We begin with the raw amino-acid sequence, 415 residues long: NPL4-like protein (415 aa).

An MPN domain is found at 130-279; the sequence is AASFDRDSAN…FEAFQMSEIC (150 aa).

The protein belongs to the NPL4 family.

It localises to the endoplasmic reticulum. It participates in protein degradation; proteasomal ubiquitin-dependent pathway. May be part of a complex that binds ubiquitinated proteins and that is necessary for the export of misfolded proteins from the ER to the cytoplasm, where they are degraded by the proteasome. The protein is NPL4-like protein of Oryza sativa subsp. japonica (Rice).